Reading from the N-terminus, the 324-residue chain is Taste receptor type 2 member 116 (324 aa).

Residues 1–2 (MN) lie on the Extracellular side of the membrane. Residues 3-23 (GVLYITFTVILSVEVIIGNFG) traverse the membrane as a helical segment. The Cytoplasmic portion of the chain corresponds to 24-55 (NGIIALVNIMDLAKRRKISSVDQILTALAISR). The helical transmembrane segment at 56 to 76 (IVLLWLVLVSWWLSMFYPGQW) threads the bilayer. Topologically, residues 77–94 (MTEGIDVIVHNVWTTLNQ) are extracellular. Residues 95-115 (ISLWLATSFSVFCFLKVANFS) traverse the membrane as a helical segment. Topologically, residues 116-128 (NTIFFYLKIRVKK) are cytoplasmic. The chain crosses the membrane as a helical span at residues 129–149 (VMTGTLIMFLLLLGLNIIVIN). The Extracellular segment spans residues 150 to 183 (ASKTILIPEYKVNMSNSLNLKNTQISMLFPFANT). N162 carries N-linked (GlcNAc...) asparagine glycosylation. The helical transmembrane segment at 184-204 (LFGFIPFAVSLVTFLLLFFSL) threads the bilayer. Over 205-236 (WKHQRKMHHGAQGCRDSSTKAHIRVLQTLIAS) the chain is Cytoplasmic. A helical transmembrane segment spans residues 237–257 (ILLYFVFFLSLVVKVWISLFL). Residues 258–261 (ERML) are Extracellular-facing. Residues 262-282 (LLLITQAAKIAFPSLHPWVLI) traverse the membrane as a helical segment. The Cytoplasmic portion of the chain corresponds to 283 to 324 (LGNAKLRKASLSALQWLRCRHKDEHRRVQRPEVHSCGSSCMP).

Belongs to the G-protein coupled receptor T2R family.

The protein localises to the membrane. Putative taste receptor which may play a role in the perception of bitterness. In Rattus norvegicus (Rat), this protein is Taste receptor type 2 member 116.